A 1219-amino-acid chain; its full sequence is NHS-like protein 2 (1219 aa).

10 disordered regions span residues 162 to 181, 288 to 321, 336 to 364, 400 to 423, 474 to 591, 669 to 741, 854 to 938, 979 to 1003, 1033 to 1087, and 1121 to 1197; these read FRSS…QSAK, FSNF…HSAP, FPSL…SDHP, TPSA…GNSW, GLLA…ELVL, QGSS…SASV, GAEE…STAS, IGLQ…KKPS, LEED…DKTA, and WKET…KTTN. The segment covering 288–312 has biased composition (polar residues); the sequence is FSNFSQRDQGHSSSPTGSLARSATS. Residues 352-364 show a composition bias toward basic and acidic residues; the sequence is GDAHQARSASDHP. Ser-499 is modified (phosphoserine). The span at 526–545 shows a compositional bias: polar residues; that stretch reads ASTSSEGSNSTDNIAALSTE. The segment covering 549-567 has biased composition (basic residues); it reads RHRRQRSKSISLKKAKKKP. Residue Ser-575 is modified to Phosphoserine. Low complexity predominate over residues 674–687; it reads SLASPSTSRATTPS. The residue at position 690 (Ser-690) is a Phosphoserine. Polar residues-rich tracts occupy residues 708-729 and 897-908; these read MSPS…SMSL and TSPTMAMASRSS. At Ser-1048 the chain carries Phosphoserine. Over residues 1076 to 1087 the composition is skewed to basic and acidic residues; it reads AEEKSLISDKTA. Positions 1131 to 1144 are enriched in polar residues; that stretch reads SKPSSHSPVKNTAD. Positions 1145-1160 are enriched in low complexity; sequence SPTGEAAAAPGPSSSA. Residue Ser-1208 is modified to Phosphoserine.

Belongs to the NHS family.

The protein is NHS-like protein 2 of Mus musculus (Mouse).